The sequence spans 159 residues: Phosphopantetheine adenylyltransferase (159 aa).

Thr10 is a binding site for substrate. ATP contacts are provided by residues 10–11 (TF) and His18. The substrate site is built by Lys42, Met74, and Arg88. ATP contacts are provided by residues 89 to 91 (GLR), Glu99, and 124 to 130 (WSFISSS).

It belongs to the bacterial CoaD family. In terms of assembly, homohexamer. Requires Mg(2+) as cofactor.

The protein resides in the cytoplasm. The catalysed reaction is (R)-4'-phosphopantetheine + ATP + H(+) = 3'-dephospho-CoA + diphosphate. The protein operates within cofactor biosynthesis; coenzyme A biosynthesis; CoA from (R)-pantothenate: step 4/5. Its function is as follows. Reversibly transfers an adenylyl group from ATP to 4'-phosphopantetheine, yielding dephospho-CoA (dPCoA) and pyrophosphate. The chain is Phosphopantetheine adenylyltransferase from Klebsiella pneumoniae (strain 342).